The chain runs to 544 residues: Chaperonin GroEL 1 (544 aa).

ATP contacts are provided by residues 29-32 (TLGP), 86-90 (DGTTT), Gly413, 479-481 (NAA), and Asp495.

This sequence belongs to the chaperonin (HSP60) family. As to quaternary structure, forms a cylinder of 14 subunits composed of two heptameric rings stacked back-to-back. Interacts with the co-chaperonin GroES.

It is found in the cytoplasm. The enzyme catalyses ATP + H2O + a folded polypeptide = ADP + phosphate + an unfolded polypeptide.. Functionally, together with its co-chaperonin GroES, plays an essential role in assisting protein folding. The GroEL-GroES system forms a nano-cage that allows encapsulation of the non-native substrate proteins and provides a physical environment optimized to promote and accelerate protein folding. The protein is Chaperonin GroEL 1 of Parasynechococcus marenigrum (strain WH8102).